The sequence spans 205 residues: Ribosomal RNA small subunit methyltransferase G (205 aa).

Residues glycine 70, leucine 75, 121–122 (IE), and arginine 136 contribute to the S-adenosyl-L-methionine site.

This sequence belongs to the methyltransferase superfamily. RNA methyltransferase RsmG family.

It is found in the cytoplasm. It catalyses the reaction guanosine(527) in 16S rRNA + S-adenosyl-L-methionine = N(7)-methylguanosine(527) in 16S rRNA + S-adenosyl-L-homocysteine. Its function is as follows. Specifically methylates the N7 position of guanine in position 527 of 16S rRNA. The sequence is that of Ribosomal RNA small subunit methyltransferase G from Methylococcus capsulatus (strain ATCC 33009 / NCIMB 11132 / Bath).